The chain runs to 451 residues: Phenylalanine-4-hydroxylase (451 aa).

Residue Ser16 is modified to Phosphoserine; by PKA. Positions 35–113 constitute an ACT domain; that stretch reads SLIFSLKEEV…TVHELSRDKK (79 aa). 3 residues coordinate Fe cation: His284, His289, and Glu329.

It belongs to the biopterin-dependent aromatic amino acid hydroxylase family. Homodimer and homotetramer. It depends on Fe(2+) as a cofactor. Phosphorylation at Ser-16 increases basal activity and facilitates activation by the substrate phenylalanine.

It catalyses the reaction (6R)-L-erythro-5,6,7,8-tetrahydrobiopterin + L-phenylalanine + O2 = (4aS,6R)-4a-hydroxy-L-erythro-5,6,7,8-tetrahydrobiopterin + L-tyrosine. It participates in amino-acid degradation; L-phenylalanine degradation; acetoacetate and fumarate from L-phenylalanine: step 1/6. Its activity is regulated as follows. N-terminal region of PAH is thought to contain allosteric binding sites for phenylalanine and to constitute an 'inhibitory' domain that regulates the activity of a catalytic domain in the C-terminal portion of the molecule. Its function is as follows. Catalyzes the hydroxylation of L-phenylalanine to L-tyrosine. This Bos taurus (Bovine) protein is Phenylalanine-4-hydroxylase (PAH).